Here is a 216-residue protein sequence, read N- to C-terminus: Cytochrome c-type protein Cgr1 (216 aa).

A helical membrane pass occupies residues 18–38 (WPIVVGVVVVVLIAAGAGFWV). Heme contacts are provided by C46, C50, H51, C95, C98, H99, C142, C147, H148, C176, C179, H180, C190, C193, and H194.

It belongs to the multiheme cytochrome c family. In terms of assembly, may form a membrane-associated complex with Cgr2. In terms of processing, binds 5 heme groups per subunit.

It localises to the cell membrane. Its function is as follows. Probably transfers electrons from a membrane-associated electron donor (e.g. the membrane quinone pool) to the [4Fe-4S] cluster of the Cgr2 reductase via its covalently bound heme groups. The polypeptide is Cytochrome c-type protein Cgr1 (Eggerthella lenta (strain ATCC 25559 / DSM 2243 / CCUG 17323 / JCM 9979 / KCTC 3265 / NCTC 11813 / VPI 0255 / 1899 B) (Eubacterium lentum)).